Consider the following 199-residue polypeptide: UPF0301 protein Anae109_0457 (199 aa).

This sequence belongs to the UPF0301 (AlgH) family.

This is UPF0301 protein Anae109_0457 from Anaeromyxobacter sp. (strain Fw109-5).